We begin with the raw amino-acid sequence, 507 residues long: MNPMPSALPSDFLHVDLVTLSPLILLAAAAVVVMLTAAFYRHPRPVMILTLAGLVLSFMALFLSQGTASSQVTTLLILDQYALFFIGLIVVATFVVAILCYRYFGGGESRHEALYILLLLAALGGGVLVASSHFASFLLGLELLSISLFALIAYPRFTEHPLEAGIKYLILAGFSSGLLLFGMALVYAQLGTMQFVKIGTMLAAPGAALELYGLAGLALIVTGVGFKLALVPFHMWTPDVYEGAPVPITAFIATASKGAMLVLLLRYFLMAGAHQSHSITFALSLIAVATILVGNLLALLQNNIKRILAYSSIAQLGYLLVGFLAFDQLAIEAVAYFLTAYFVTMLGAFGVVTVLSEGFNGGSAGEFHDAGEKDSDRLADYAGLFWHRPWLAGVFTAMLLSLAGIPLTMGFIGKFYIVTAGVEASLWMPVITLVIGSIIGLFYYMRIIAVMYGWGPEAAGEAIMLRAASPSFAESATLAALALLLIWLGIFPAQLIGVLEGAGGGLT.

15 helical membrane-spanning segments follow: residues 17 to 37, 46 to 66, 81 to 101, 113 to 133, 134 to 154, 168 to 188, 190 to 210, 211 to 231, 245 to 265, 279 to 299, 307 to 327, 334 to 354, 392 to 412, 425 to 445, and 478 to 498; these read LVTL…MLTA, VMIL…LSQG, YALF…ILCY, ALYI…ASSH, FASF…LIAY, YLIL…LVYA, LGTM…AALE, LYGL…LALV, PVPI…VLLL, ITFA…LLAL, ILAY…LAFD, VAYF…VVTV, AGVF…MGFI, SLWM…FYYM, and LAAL…LIGV.

The protein belongs to the complex I subunit 2 family. In terms of assembly, NDH-1 is composed of 14 different subunits. Subunits NuoA, H, J, K, L, M, N constitute the membrane sector of the complex.

It is found in the cell inner membrane. It carries out the reaction a quinone + NADH + 5 H(+)(in) = a quinol + NAD(+) + 4 H(+)(out). Functionally, NDH-1 shuttles electrons from NADH, via FMN and iron-sulfur (Fe-S) centers, to quinones in the respiratory chain. The immediate electron acceptor for the enzyme in this species is believed to be ubiquinone. Couples the redox reaction to proton translocation (for every two electrons transferred, four hydrogen ions are translocated across the cytoplasmic membrane), and thus conserves the redox energy in a proton gradient. The chain is NADH-quinone oxidoreductase subunit N from Nitrosospira multiformis (strain ATCC 25196 / NCIMB 11849 / C 71).